A 321-amino-acid chain; its full sequence is tRNA-5-methyluridine(54) 2-sulfurtransferase (321 aa).

Residues Cys3, Cys6, Cys22, and His25 each coordinate Zn(2+). Residues 53 to 55 (AVS), Asp59, and Ile79 each bind ATP. [4Fe-4S] cluster is bound by residues Cys130 and Cys133. A Glycyl lysine isopeptide (Lys-Gly) (interchain with G-Cter in TtuB) cross-link involves residue Lys137. Positions 156 and 161 each coordinate ATP. Cys222 is a [4Fe-4S] cluster binding site. Glycyl lysine isopeptide (Lys-Gly) (interchain with G-Cter in TtuB) cross-links involve residues Lys226 and Lys229. The Zn(2+) site is built by Cys274, Cys277, Cys286, and Cys289.

The protein belongs to the TtcA family. TtuA subfamily. Homodimer. Is able to form a heterocomplex with TtuB. It depends on [4Fe-4S] cluster as a cofactor. Mg(2+) serves as cofactor. Post-translationally, conjugated to TtuB via covalent linkages involving Lys-137, Lys-226 and Lys-229.

It carries out the reaction [TtuB sulfur-carrier protein]-C-terminal-Gly-aminoethanethioate + 5-methyluridine(54) in tRNA + ATP + H2O = [TtuB sulfur-carrier protein]-C-terminal Gly-Gly + 5-methyl-2-thiouridine(54) in tRNA + AMP + diphosphate + H(+). It functions in the pathway tRNA modification. Enzymatic activity may be regulated by TtuB conjugation. Catalyzes the ATP-dependent 2-thiolation of 5-methyluridine residue at position 54 in the T loop of tRNAs, leading to 5-methyl-2-thiouridine (m(5)s(2)U or s(2)T). This modification allows thermal stabilization of tRNAs in thermophilic microorganisms, and is required for cell growth at high temperatures. TtuA transfers the S atom from the thiocarboxylated C-terminus of TtuB to tRNA. This is tRNA-5-methyluridine(54) 2-sulfurtransferase from Thermus thermophilus (strain ATCC BAA-163 / DSM 7039 / HB27).